Here is a 95-residue protein sequence, read N- to C-terminus: Protein TusB (95 aa).

Belongs to the DsrH/TusB family. In terms of assembly, heterohexamer, formed by a dimer of trimers. The hexameric TusBCD complex contains 2 copies each of TusB, TusC and TusD. The TusBCD complex interacts with TusE.

Its subcellular location is the cytoplasm. Functionally, part of a sulfur-relay system required for 2-thiolation of 5-methylaminomethyl-2-thiouridine (mnm(5)s(2)U) at tRNA wobble positions. The sequence is that of Protein TusB from Buchnera aphidicola subsp. Baizongia pistaciae (strain Bp).